We begin with the raw amino-acid sequence, 461 residues long: Flavin-containing monooxygenase FMO GS-OX-like 8 (461 aa).

An FAD-binding site is contributed by 20–25; that stretch reads GAGPSG. Position 220–225 (220–225) interacts with NADP(+); it reads GCSMSG.

This sequence belongs to the FMO family. Interacts with EER5. The cofactor is FAD.

In terms of biological role, catalyzes the conversion of methylthioalkyl glucosinolates of any chain length into methylsulfinylalkyl glucosinolates. The protein is Flavin-containing monooxygenase FMO GS-OX-like 8 of Arabidopsis thaliana (Mouse-ear cress).